A 482-amino-acid chain; its full sequence is tRNA sulfurtransferase (482 aa).

The THUMP domain maps to 61-165; sequence LAIRDALTRI…DDRLLLIKGR (105 aa). ATP-binding positions include 183–184, lysine 265, glycine 287, and glutamine 296; that span reads LI. A disulfide bridge connects residues cysteine 344 and cysteine 456. Residues 404-482 enclose the Rhodanese domain; it reads FGPNDVILDI…GFNNVKVYRP (79 aa). Residue cysteine 456 is the Cysteine persulfide intermediate of the active site.

The protein belongs to the ThiI family.

It localises to the cytoplasm. It catalyses the reaction [ThiI sulfur-carrier protein]-S-sulfanyl-L-cysteine + a uridine in tRNA + 2 reduced [2Fe-2S]-[ferredoxin] + ATP + H(+) = [ThiI sulfur-carrier protein]-L-cysteine + a 4-thiouridine in tRNA + 2 oxidized [2Fe-2S]-[ferredoxin] + AMP + diphosphate. The catalysed reaction is [ThiS sulfur-carrier protein]-C-terminal Gly-Gly-AMP + S-sulfanyl-L-cysteinyl-[cysteine desulfurase] + AH2 = [ThiS sulfur-carrier protein]-C-terminal-Gly-aminoethanethioate + L-cysteinyl-[cysteine desulfurase] + A + AMP + 2 H(+). Its pathway is cofactor biosynthesis; thiamine diphosphate biosynthesis. Its function is as follows. Catalyzes the ATP-dependent transfer of a sulfur to tRNA to produce 4-thiouridine in position 8 of tRNAs, which functions as a near-UV photosensor. Also catalyzes the transfer of sulfur to the sulfur carrier protein ThiS, forming ThiS-thiocarboxylate. This is a step in the synthesis of thiazole, in the thiamine biosynthesis pathway. The sulfur is donated as persulfide by IscS. This chain is tRNA sulfurtransferase, found in Shigella boydii serotype 4 (strain Sb227).